A 330-amino-acid chain; its full sequence is DNA repair and recombination protein RadA (330 aa).

Position 124–131 (124–131 (GEFGSGKT)) interacts with ATP.

It belongs to the eukaryotic RecA-like protein family.

Functionally, involved in DNA repair and in homologous recombination. Binds and assemble on single-stranded DNA to form a nucleoprotein filament. Hydrolyzes ATP in a ssDNA-dependent manner and promotes DNA strand exchange between homologous DNA molecules. This chain is DNA repair and recombination protein RadA, found in Pyrobaculum neutrophilum (strain DSM 2338 / JCM 9278 / NBRC 100436 / V24Sta) (Thermoproteus neutrophilus).